Reading from the N-terminus, the 596-residue chain is Phosphoenolpyruvate carboxykinase [GTP] (596 aa).

Substrate contacts are provided by residues R77 and 205-207 (YGG). Mn(2+) is bound by residues K214 and H234. A substrate-binding site is contributed by S256. GTP is bound at residue 257–262 (ACGKTN). Residue C258 is part of the active site. D283 provides a ligand contact to Mn(2+). The tract at residues 362-388 (KKGSTEKAAHPNSRFTAPAKNNPAISP) is disordered. 373-375 (NSR) is a binding site for substrate. Residues R375, R406, and 499 to 502 (YGDN) each bind GTP.

It belongs to the phosphoenolpyruvate carboxykinase [GTP] family. In terms of assembly, monomer. The cofactor is Mn(2+).

The protein localises to the cytoplasm. It carries out the reaction oxaloacetate + GTP = phosphoenolpyruvate + GDP + CO2. It participates in carbohydrate biosynthesis; gluconeogenesis. Functionally, catalyzes the conversion of oxaloacetate (OAA) to phosphoenolpyruvate (PEP), the rate-limiting step in the metabolic pathway that produces glucose from lactate and other precursors derived from the citric acid cycle. The polypeptide is Phosphoenolpyruvate carboxykinase [GTP] (Anaeromyxobacter sp. (strain K)).